Reading from the N-terminus, the 138-residue chain is Acidic phospholipase A2 AplTX-I (138 aa).

A signal peptide spans 1–16; it reads MRTLWIMAVLLLGVEG. Cystine bridges form between Cys42–Cys131, Cys44–Cys60, Cys59–Cys111, Cys65–Cys138, Cys66–Cys104, Cys73–Cys97, and Cys91–Cys102. Tyr43, Gly45, and Gly47 together coordinate Ca(2+). Residue His63 is part of the active site. Asp64 serves as a coordination point for Ca(2+). Residue Asp105 is part of the active site.

As to quaternary structure, monomer. It depends on Ca(2+) as a cofactor. In terms of tissue distribution, expressed by the venom gland.

It is found in the secreted. The enzyme catalyses a 1,2-diacyl-sn-glycero-3-phosphocholine + H2O = a 1-acyl-sn-glycero-3-phosphocholine + a fatty acid + H(+). Inhibited by divalent cations different from calcium ions (cadmium, magnesium, manganese, zinc), since they act as competitive antagonists of this cofactor. In terms of biological role, snake venom phospholipase A2 (PLA2) that triggers a high neuromuscular toxicity in chick biventer cervicis preparations, but not in mouse phrenic nerve-diaphragm (PND) preparations, suggesting a selective neurotoxin activity towards birds. Does not induce myotoxic, coagulant, anticoagulant, edema, and antibacterial activities. PLA2 catalyzes the calcium-dependent hydrolysis of the 2-acyl groups in 3-sn-phosphoglycerides. The protein is Acidic phospholipase A2 AplTX-I of Agkistrodon piscivorus leucostoma (Western cottonmouth).